Reading from the N-terminus, the 226-residue chain is Prolactin (226 aa).

Positions 1 to 29 (MNSQGSAQKAGTLLLLLISNLLFCQNVQP) are cleaved as a signal peptide. Cysteine 33 and cysteine 38 are oxidised to a cystine. 2 positions are modified to phosphoserine: serine 53 and serine 117. Cystine bridges form between cysteine 85–cysteine 201 and cysteine 218–cysteine 226.

Belongs to the somatotropin/prolactin family. In terms of assembly, interacts with PRLR.

The protein resides in the secreted. Its function is as follows. Prolactin acts primarily on the mammary gland by promoting lactation. The polypeptide is Prolactin (Prl) (Mus musculus (Mouse)).